Reading from the N-terminus, the 295-residue chain is uncharacterized protein (295 aa).

The HTH lysR-type domain occupies methionine 1–serine 58. A DNA-binding region (H-T-H motif) is located at residues isoleucine 18 to glutamine 37.

It belongs to the LysR transcriptional regulatory family.

This is an uncharacterized protein from Bacillus subtilis (strain 168).